We begin with the raw amino-acid sequence, 160 residues long: ATP synthase subunit b 3 (160 aa).

Residues 5 to 25 traverse the membrane as a helical segment; the sequence is PTFWVLVAFVLFVAAVWRIAA.

The protein belongs to the ATPase B chain family. In terms of assembly, F-type ATPases have 2 components, F(1) - the catalytic core - and F(0) - the membrane proton channel. F(1) has five subunits: alpha(3), beta(3), gamma(1), delta(1), epsilon(1). F(0) has three main subunits: a(1), b(2) and c(10-14). The alpha and beta chains form an alternating ring which encloses part of the gamma chain. F(1) is attached to F(0) by a central stalk formed by the gamma and epsilon chains, while a peripheral stalk is formed by the delta and b chains.

The protein resides in the cell inner membrane. Its function is as follows. F(1)F(0) ATP synthase produces ATP from ADP in the presence of a proton or sodium gradient. F-type ATPases consist of two structural domains, F(1) containing the extramembraneous catalytic core and F(0) containing the membrane proton channel, linked together by a central stalk and a peripheral stalk. During catalysis, ATP synthesis in the catalytic domain of F(1) is coupled via a rotary mechanism of the central stalk subunits to proton translocation. Component of the F(0) channel, it forms part of the peripheral stalk, linking F(1) to F(0). The chain is ATP synthase subunit b 3 from Rhodospirillum centenum (strain ATCC 51521 / SW).